Here is a 486-residue protein sequence, read N- to C-terminus: Lipase 1 (486 aa).

C58 and C82 form a disulfide bridge. S193 acts as the Acyl-ester intermediate in catalysis. The active-site Charge relay system is D303. A glycan (N-linked (GlcNAc...) asparagine) is linked at N332. The Charge relay system role is filled by H392.

Belongs to the type-B carboxylesterase/lipase family.

It catalyses the reaction a triacylglycerol + H2O = a diacylglycerol + a fatty acid + H(+). In Yarrowia lipolytica (strain CLIB 122 / E 150) (Yeast), this protein is Lipase 1 (LIP1).